A 98-amino-acid chain; its full sequence is UPF0251 protein VC0395_0048/VC395_A0084 (98 aa).

This sequence belongs to the UPF0251 family.

This Vibrio cholerae serotype O1 (strain ATCC 39541 / Classical Ogawa 395 / O395) protein is UPF0251 protein VC0395_0048/VC395_A0084.